Consider the following 324-residue polypeptide: tRNA U34 carboxymethyltransferase (324 aa).

Residues Lys91, Trp105, Lys110, Gly130, 152–154, 181–182, Met196, Tyr200, and Arg315 contribute to the carboxy-S-adenosyl-L-methionine site; these read DPS and IE.

The protein belongs to the class I-like SAM-binding methyltransferase superfamily. CmoB family. Homotetramer.

The catalysed reaction is carboxy-S-adenosyl-L-methionine + 5-hydroxyuridine(34) in tRNA = 5-carboxymethoxyuridine(34) in tRNA + S-adenosyl-L-homocysteine + H(+). Its function is as follows. Catalyzes carboxymethyl transfer from carboxy-S-adenosyl-L-methionine (Cx-SAM) to 5-hydroxyuridine (ho5U) to form 5-carboxymethoxyuridine (cmo5U) at position 34 in tRNAs. In Aliivibrio fischeri (strain ATCC 700601 / ES114) (Vibrio fischeri), this protein is tRNA U34 carboxymethyltransferase.